The following is a 330-amino-acid chain: ADP-L-glycero-D-manno-heptose-6-epimerase (330 aa).

NADP(+)-binding positions include 11–12 (FI), 32–33 (DN), K39, K54, 75–79 (EGACS), and N92. Y139 functions as the Proton acceptor in the catalytic mechanism. K143 contributes to the NADP(+) binding site. N168 is a substrate binding site. 2 residues coordinate NADP(+): V169 and K177. The Proton acceptor role is filled by K177. Residues R179, H186, 200 to 203 (FGEY), R213, and Y292 each bind substrate.

The protein belongs to the NAD(P)-dependent epimerase/dehydratase family. HldD subfamily. As to quaternary structure, homopentamer. It depends on NADP(+) as a cofactor.

The enzyme catalyses ADP-D-glycero-beta-D-manno-heptose = ADP-L-glycero-beta-D-manno-heptose. Its pathway is nucleotide-sugar biosynthesis; ADP-L-glycero-beta-D-manno-heptose biosynthesis; ADP-L-glycero-beta-D-manno-heptose from D-glycero-beta-D-manno-heptose 7-phosphate: step 4/4. In terms of biological role, catalyzes the interconversion between ADP-D-glycero-beta-D-manno-heptose and ADP-L-glycero-beta-D-manno-heptose via an epimerization at carbon 6 of the heptose. The polypeptide is ADP-L-glycero-D-manno-heptose-6-epimerase (Burkholderia ambifaria (strain MC40-6)).